Reading from the N-terminus, the 1087-residue chain is Gelsolin-related protein of 125 kDa (1087 aa).

Residues 1-40 (MEEDNIVDSKEIENNVEDKKEETPSSSPSPSSSLQQQQEE) form a disordered region. Residues 7 to 23 (VDSKEIENNVEDKKEET) show a composition bias toward basic and acidic residues. Residues 24 to 40 (PSSSPSPSSSLQQQQEE) are compositionally biased toward low complexity. Gelsolin-like repeat units follow at residues 73 to 146 (PFHF…PTFL), 183 to 286 (FLFK…FSKW), 335 to 442 (GKLL…FGTE), and 465 to 538 (TQLF…DNFW). The stretch at 550 to 598 (INTFINENKEEKEKEEEEKEEEEEEEEEEEEEEEEEKDNNKTTTIIKHL) forms a coiled coil. Residues 555 to 592 (NENKEEKEKEEEEKEEEEEEEEEEEEEEEEEKDNNKTT) are disordered. Residues 562 to 586 (EKEEEEKEEEEEEEEEEEEEEEEEK) show a composition bias toward acidic residues. A Gelsolin-like 5 repeat occupies 614-692 (IFKADQINPF…EQYNESPLFK (79 aa)). Residues 710–912 (IISYKQKLAE…ETVNEENEVG (203 aa)) are a coiled coil. 4 stretches are compositionally biased toward basic and acidic residues: residues 732 to 770 (KQQQ…KEEE), 779 to 808 (EEVK…KEVN), 817 to 840 (EEVK…KEEE), and 849 to 900 (EEVK…KVNE). The interval 732–1087 (KQQQEQEQEQ…HNRSSSLTHA (356 aa)) is disordered. Residues 901 to 910 (ENETVNEENE) are compositionally biased toward acidic residues. 2 stretches are compositionally biased toward polar residues: residues 925–939 (ANSS…NEGS) and 950–961 (EPITPSVVSSSG). Residues 983 to 1002 (QGRKGGRKSHGKNQPQHKKN) are compositionally biased toward basic residues. Over residues 1018-1040 (KSLNLDIDNQSFDLNSINNNNSV) the composition is skewed to polar residues. A compositionally biased stretch (low complexity) spans 1047-1065 (SSPLSFSSSSINSNSTHNT). Positions 1066-1080 (PSKKNKNKNKKKHNR) are enriched in basic residues.

The protein belongs to the villin/gelsolin family. Interacts with rasD and abpC.

It is found in the cytoplasmic vesicle. Its function is as follows. Involved in phototaxis. Required for coupling photodetection to the locomotory machinery of slugs. May be essential in the natural environment for the propagation of spores. The polypeptide is Gelsolin-related protein of 125 kDa (gnrA) (Dictyostelium discoideum (Social amoeba)).